A 475-amino-acid polypeptide reads, in one-letter code: BICD family-like cargo adapter 2 (475 aa).

Residues 56-275 adopt a coiled-coil conformation; it reads ELGKALLERN…LKELQDELHM (220 aa). Polar residues-rich tracts occupy residues 286 to 300 and 308 to 318; these read HSSL…TAVQ and SAETQSITSGY. Residues 286–318 form a disordered region; sequence HSSLHSEIQQSTAVQNHEKGRNSAETQSITSGY. The stretch at 340–413 forms a coiled coil; the sequence is RLQDQVTMQH…ESLNLQLLST (74 aa). The segment covering 440–450 has biased composition (low complexity); that stretch reads QSQKQQETQKP. The segment at 440-459 is disordered; sequence QSQKQQETQKPPESPQNSFL.

Belongs to the BICDR family.

This chain is BICD family-like cargo adapter 2 (bicdl2), found in Xenopus tropicalis (Western clawed frog).